A 537-amino-acid polypeptide reads, in one-letter code: 5,6-dihydroxyindole-2-carboxylic acid oxidase (537 aa).

The N-terminal stretch at 1 to 24 (MKSYNVLPLAYISLFLMLFYQVWA) is a signal peptide. Residues 25–477 (QFPRECANIE…WPGQEFTVSE (453 aa)) lie on the Lumenal, melanosome side of the membrane. 5 cysteine pairs are disulfide-bonded: Cys30/Cys41, Cys42/Cys65, Cys56/Cys99, Cys101/Cys110, and Cys113/Cys122. Residues Asn96 and Asn104 are each glycosylated (N-linked (GlcNAc...) asparagine). An N-linked (GlcNAc...) asparagine glycan is attached at Asn181. Positions 192, 215, and 224 each coordinate Zn(2+). Intrachain disulfides connect Cys258–Cys261 and Cys290–Cys303. Residues Asn304 and Asn350 are each glycosylated (N-linked (GlcNAc...) asparagine). Zn(2+) contacts are provided by His377 and His381. A glycan (N-linked (GlcNAc...) asparagine) is linked at Asn385. His404 contributes to the Zn(2+) binding site. The chain crosses the membrane as a helical span at residues 478 to 501 (IITIAVVAALLLVAAIFGVASCLI). Residues 502 to 537 (RSRSTKNEANQPLLTDHYQRYAEDYEELPNPNHSMV) are Cytoplasmic-facing.

Belongs to the tyrosinase family. As to quaternary structure, monomer. Interacts with ATP7A. Interacts with SLC45A2. It depends on Cu(2+) as a cofactor. Zn(2+) is required as a cofactor. In terms of processing, glycosylated. In terms of tissue distribution, pigment cells.

It is found in the melanosome membrane. The enzyme catalyses 2 5,6-dihydroxyindole-2-carboxylate + O2 = 2 indole-5,6-quinone-2-carboxylate + 2 H2O. The protein operates within pigment biosynthesis; melanin biosynthesis. Functionally, plays a role in melanin biosynthesis. Catalyzes the oxidation of 5,6-dihydroxyindole-2-carboxylic acid (DHICA) into indole-5,6-quinone-2-carboxylic acid. May regulate or influence the type of melanin synthesized. Also to a lower extent, capable of hydroxylating tyrosine and producing melanin. The chain is 5,6-dihydroxyindole-2-carboxylic acid oxidase (Tyrp1) from Mus musculus (Mouse).